Reading from the N-terminus, the 184-residue chain is Elongation factor P (184 aa).

Belongs to the elongation factor P family.

Its subcellular location is the cytoplasm. Its pathway is protein biosynthesis; polypeptide chain elongation. Its function is as follows. Involved in peptide bond synthesis. Stimulates efficient translation and peptide-bond synthesis on native or reconstituted 70S ribosomes in vitro. Probably functions indirectly by altering the affinity of the ribosome for aminoacyl-tRNA, thus increasing their reactivity as acceptors for peptidyl transferase. This is Elongation factor P from Polaromonas sp. (strain JS666 / ATCC BAA-500).